We begin with the raw amino-acid sequence, 391 residues long: Ectodysplasin-A (391 aa).

Positions 1-21 are enriched in basic and acidic residues; it reads MGYPEVERREPLPAAAPRERG. Residues 1 to 28 are disordered; it reads MGYPEVERREPLPAAAPRERGSQGCGCR. Residues 1–41 lie on the Cytoplasmic side of the membrane; that stretch reads MGYPEVERREPLPAAAPRERGSQGCGCRGAPARAGEGNSCR. Residues 42–62 form a helical; Signal-anchor for type II membrane protein membrane-spanning segment; sequence LFLGFFGLSLALHLLTLCCYL. The Extracellular segment spans residues 63–391; that stretch reads ELRSELRRER…AIRLGEAPAS (329 aa). Disordered stretches follow at residues 72–129 and 146–244; these read RGTE…DSQD and YSEE…TGTR. A compositionally biased stretch (low complexity) spans 86 to 96; that stretch reads TSGTLSSPGSL. The region spanning 180 to 229 is the Collagen-like domain; the sequence is GPPGPNGPPGPPGPPGPQGPPGIPGIPGIPGTTVMGPPGPPGPPGPQGPP. Composition is skewed to pro residues over residues 181-203 and 216-228; these read PPGP…PGIP and PPGP…PQGP. In terms of domain architecture, THD spans 249–385; it reads AVVHLQGQGS…HTTFFGAIRL (137 aa). N-linked (GlcNAc...) asparagine glycosylation is present at N313. C332 and C346 are joined by a disulfide. N372 carries N-linked (GlcNAc...) asparagine glycosylation.

The protein belongs to the tumor necrosis factor family. Homotrimer. The homotrimers may then dimerize and form higher-order oligomers. N-glycosylated. In terms of processing, processing by furin produces a secreted form.

Its subcellular location is the cell membrane. It localises to the secreted. Functionally, cytokine which is involved in epithelial-mesenchymal signaling during morphogenesis of ectodermal organs. Functions as a ligand activating the DEATH-domain containing receptors EDAR and EDA2R. Isoform TAA binds only to the receptor EDAR, while isoform TA-A2 binds exclusively to the receptor EDA2R. May also play a role in cell adhesion. Its function is as follows. Isoform TAA binds only to the receptor EDAR, while isoform TA-A2 binds exclusively to the receptor EDA2R. Isoform TA-A2 binds exclusively to the receptor EDA2R. This Mus musculus (Mouse) protein is Ectodysplasin-A (Eda).